A 393-amino-acid polypeptide reads, in one-letter code: uncharacterized protein (393 aa).

Residues 164 to 183 form a disordered region; it reads ASDPHPGKNSPASPTGENKE. Positions 173 to 183 are enriched in polar residues; that stretch reads SPASPTGENKE.

This is an uncharacterized protein from Treponema pallidum (strain Nichols).